Consider the following 261-residue polypeptide: MSRIADTFARLRAAGRTALMPYLMTGYPERDSVLDLAPALEDAGADLFELGVPFSDPLADGATIQRASERALANGVRLEHCIATIAVLRERGVRAPIVPMGYYNPFLQYGLARLARDMAAAGADGLIIPDLPPEEAQECHAACREYGLDLIFFVAPTTPDERIARITALASGFIYCVSLTGVTGARRELWSGLPAFLERVRRHTTLPLVVGFGISSADHVREVGRHAAGAIVASALINVIEQSHPGEYVARAAEFVRLLRG.

Active-site proton acceptor residues include glutamate 49 and aspartate 60.

Belongs to the TrpA family. In terms of assembly, tetramer of two alpha and two beta chains.

It carries out the reaction (1S,2R)-1-C-(indol-3-yl)glycerol 3-phosphate + L-serine = D-glyceraldehyde 3-phosphate + L-tryptophan + H2O. Its pathway is amino-acid biosynthesis; L-tryptophan biosynthesis; L-tryptophan from chorismate: step 5/5. The alpha subunit is responsible for the aldol cleavage of indoleglycerol phosphate to indole and glyceraldehyde 3-phosphate. The polypeptide is Tryptophan synthase alpha chain (Roseiflexus castenholzii (strain DSM 13941 / HLO8)).